We begin with the raw amino-acid sequence, 314 residues long: Homoserine O-acetyltransferase (314 aa).

C142 acts as the Acyl-thioester intermediate in catalysis. Residues K163 and S192 each coordinate substrate. Residue H235 is the Proton acceptor of the active site. E237 is an active-site residue. R249 serves as a coordination point for substrate.

This sequence belongs to the MetA family.

The protein resides in the cytoplasm. The enzyme catalyses L-homoserine + acetyl-CoA = O-acetyl-L-homoserine + CoA. It functions in the pathway amino-acid biosynthesis; L-methionine biosynthesis via de novo pathway; O-acetyl-L-homoserine from L-homoserine: step 1/1. Transfers an acetyl group from acetyl-CoA to L-homoserine, forming acetyl-L-homoserine. The chain is Homoserine O-acetyltransferase from Streptococcus pneumoniae (strain Taiwan19F-14).